The primary structure comprises 328 residues: uncharacterized protein (328 aa).

In terms of domain architecture, SIS spans 37–179 (LTEKLLCHQG…AMTLLRCRKI (143 aa)). Residue 52–57 (GIGKSG) participates in ATP binding. CBS domains lie at 207-264 (PRTE…GGDI) and 273-328 (MTRN…AGLL).

Belongs to the SIS family. GutQ/KpsF subfamily.

This is an uncharacterized protein from Chlamydia trachomatis serovar D (strain ATCC VR-885 / DSM 19411 / UW-3/Cx).